We begin with the raw amino-acid sequence, 842 residues long: MKPGGFWLHLTLLGASLPAALGWMDPGTSRGPDVGVGESQAEEPRSFEVTRREGLSSHNELLASCGKKFCSRGSRCVLSRKTGEPECQCLEACRPSYVPVCGSDGRFYENHCKLHRAACLLGKRITVIHSKDCFLKGDTCTMAGYARLKNVLLALQTRLQPLQEGDSRQDPASQKRLLVESLFRDLDADGNGHLSSSELAQHVLKKQDLDEDLLGCSPGDLLRFDDYNSDSSLTLREFYMAFQVVQLSLAPEDRVSVTTVTVGLSTVLTCAVHGDLRPPIIWKRNGLTLNFLDLEDINDFGEDDSLYITKVTTIHMGNYTCHASGHEQLFQTHVLQVNVPPVIRVYPESQAQEPGVAASLRCHAEGIPMPRITWLKNGVDVSTQMSKQLSLLANGSELHISSVRYEDTGAYTCIAKNEVGVDEDISSLFIEDSARKTLANILWREEGLSVGNMFYVFSDDGIIVIHPVDCEIQRHLKPTEKIFMSYEEICPQREKNATQPCQWVSAVNVRNRYIYVAQPALSRVLVVDIQAQKVLQSIGVDPLPAKLSYDKSHDQVWVLSWGDVHKSRPSLQVITEASTGQSQHLIRTPFAGVDDFFIPPTNLIINHIRFGFIFNKSDPAVHKVDLETMMPLKTIGLHHHGCVPQAMAHTHLGGYFFIQCRQDSPASAARQLLVDSVTDSVLGPNGDVTGTPHTSPDGRFIVSAAADSPWLHVQEITVRGEIQTLYDLQINSGISDLAFQRSFTESNQYNIYAALHTEPDLLFLELSTGKVGMLKNLKEPPAGPAQPWGGTHRIMRDSGLFGQYLLTPARESLFLINGRQNTLRCEVSGIKGGTTVVWVGEV.

An N-terminal signal peptide occupies residues 1-22 (MKPGGFWLHLTLLGASLPAALG). One can recognise a Kazal-like domain in the interval 81-135 (KTGEPECQCLEACRPSYVPVCGSDGRFYENHCKLHRAACLLGKRITVIHSKDCFL). Cystine bridges form between cysteine 87–cysteine 119, cysteine 93–cysteine 112, and cysteine 101–cysteine 133. The 36-residue stretch at 174 to 209 (QKRLLVESLFRDLDADGNGHLSSSELAQHVLKKQDL) folds into the EF-hand domain. Residues aspartate 187, aspartate 189, asparagine 191, histidine 193, and glutamate 198 each contribute to the Ca(2+) site. Ig-like domains lie at 251-338 (PEDR…LQVN) and 341-426 (PVIR…EDIS). 2 disulfides stabilise this stretch: cysteine 270-cysteine 321 and cysteine 362-cysteine 413. Asparagine 318 carries an N-linked (GlcNAc...) asparagine glycan.

The protein localises to the secreted. This Homo sapiens (Human) protein is Follistatin-related protein 4 (FSTL4).